Consider the following 863-residue polypeptide: Ribosomal protein S6 kinase alpha-5 (863 aa).

The segment covering 1–21 (MEGEGGGSGGAGTSGDSGDGG) has biased composition (gly residues). Residues 1–22 (MEGEGGGSGGAGTSGDSGDGGE) are disordered. The Protein kinase 1 domain occupies 48 to 317 (FELLKVLGTG…AEEIKEHLFF (270 aa)). ATP is bound by residues 54 to 62 (LGTGAYGKV) and lysine 80. The active-site Proton acceptor is the aspartate 176. The residue at position 211 (serine 211) is a Phosphoserine; by autocatalysis. The AGC-kinase C-terminal domain occupies 318-386 (EKIKWDDLAA…VAPSILFKRN (69 aa)). The residue at position 359 (serine 359) is a Phosphoserine; by MAPK1, MAPK3 and MAPK14. 2 positions are modified to phosphoserine; by autocatalysis: serine 375 and serine 380. Positions 428–675 (DKPLGEGSFS…SCDLWSLGVI (248 aa)) constitute a Protein kinase 2 domain. ATP is bound by residues 431-440 (LGEGSFSICR) and lysine 454. Aspartate 608 acts as the Proton acceptor in catalysis. Threonine 645 is subject to Phosphothreonine; by MAPK1, MAPK3 and MAPK14. A phosphoserine mark is found at serine 711, serine 721, serine 755, and serine 759. A Phosphothreonine modification is found at threonine 764. Residues 805-863 (AKRRKMKRTSTSTETRSSSSESSRSSSSQSHGKTTPTKTLQPSNPTEGSNPDTLFQFSD) form a disordered region. Residues 813-832 (TSTSTETRSSSSESSRSSSS) show a composition bias toward low complexity. Phosphoserine; by autocatalysis occurs at positions 814, 816, and 822. Over residues 833 to 863 (QSHGKTTPTKTLQPSNPTEGSNPDTLFQFSD) the composition is skewed to polar residues. Serine 862 is modified (phosphoserine).

The protein belongs to the protein kinase superfamily. AGC Ser/Thr protein kinase family. S6 kinase subfamily. As to quaternary structure, forms a complex with either MAPK1/ERK2 or MAPK3/ERK1 in quiescent cells which transiently dissociates following mitogenic stimulation. Also associates with MAPK14/p38-alpha. Activated RPS6KA5 associates with and phosphorylates the NF-kappa-B p65 subunit RELA. Interacts with CREBBP and EP300. Requires Mg(2+) as cofactor. Ser-375 and Thr-645 phosphorylation is required for kinase activity. Ser-375 and Ser-211 are autophosphorylated by the C-terminal kinase domain, and their phosphorylation is essential for the catalytic activity of the N-terminal kinase domain. Phosphorylated at Ser-359, Thr-645 and Thr-764 by MAPK1/ERK2, MAPK3/ERK1 and MAPK14/p38-alpha. Autophosphorylated at Ser-814, Ser-816 and Ser-822 by the N-terminal kinase domain. In terms of processing, ubiquitinated.

It localises to the nucleus. It carries out the reaction L-seryl-[protein] + ATP = O-phospho-L-seryl-[protein] + ADP + H(+). The catalysed reaction is L-threonyl-[protein] + ATP = O-phospho-L-threonyl-[protein] + ADP + H(+). With respect to regulation, activated by phosphorylation at Ser-359, Thr-645 and Thr-764 by MAPK1/ERK2, MAPK3/ERK1 and MAPK14/p38-alpha, and by further autophosphorylation of Ser-211, Ser-375 and Ser-380 by the activated C-terminal kinase domain. The active N-terminal kinase domain finally phosphorylates downstream substrates, as well as Ser-814, Ser-816 and Ser-822 in its own C-terminal region. Functionally, serine/threonine-protein kinase that is required for the mitogen or stress-induced phosphorylation of the transcription factors CREB1 and ATF1 and for the regulation of the transcription factors RELA, STAT3 and ETV1/ER81, and that contributes to gene activation by histone phosphorylation and functions in the regulation of inflammatory genes. Phosphorylates CREB1 and ATF1 in response to mitogenic or stress stimuli such as UV-C irradiation, epidermal growth factor (EGF) and anisomycin. Plays an essential role in the control of RELA transcriptional activity in response to TNF and upon glucocorticoid, associates in the cytoplasm with the glucocorticoid receptor NR3C1 and contributes to RELA inhibition and repression of inflammatory gene expression. In skeletal myoblasts is required for phosphorylation of RELA at 'Ser-276' during oxidative stress. In erythropoietin-stimulated cells, is necessary for the 'Ser-727' phosphorylation of STAT3 and regulation of its transcriptional potential. Phosphorylates ETV1/ER81 at 'Ser-191' and 'Ser-216', and thereby regulates its ability to stimulate transcription, which may be important during development and breast tumor formation. Directly represses transcription via phosphorylation of 'Ser-1' of histone H2A. Phosphorylates 'Ser-10' of histone H3 in response to mitogenics, stress stimuli and EGF, which results in the transcriptional activation of several immediate early genes, including proto-oncogenes c-fos/FOS and c-jun/JUN. May also phosphorylate 'Ser-28' of histone H3. Mediates the mitogen- and stress-induced phosphorylation of high mobility group protein 1 (HMGN1/HMG14). In lipopolysaccharide-stimulated primary macrophages, acts downstream of the Toll-like receptor TLR4 to limit the production of pro-inflammatory cytokines. Functions probably by inducing transcription of the MAP kinase phosphatase DUSP1 and the anti-inflammatory cytokine interleukin 10 (IL10), via CREB1 and ATF1 transcription factors. Plays a role in neuronal cell death by mediating the downstream effects of excitotoxic injury. Phosphorylates TRIM7 at 'Ser-106' in response to growth factor signaling via the MEK/ERK pathway, thereby stimulating its ubiquitin ligase activity. This chain is Ribosomal protein S6 kinase alpha-5 (Rps6ka5), found in Mus musculus (Mouse).